Consider the following 266-residue polypeptide: Phosphate import ATP-binding protein PstB (266 aa).

The ABC transporter domain occupies V15–I261. Residue G50–S57 coordinates ATP.

The protein belongs to the ABC transporter superfamily. Phosphate importer (TC 3.A.1.7) family. The complex is composed of two ATP-binding proteins (PstB), two transmembrane proteins (PstC and PstA) and a solute-binding protein (PstS).

The protein localises to the cell inner membrane. The enzyme catalyses phosphate(out) + ATP + H2O = ADP + 2 phosphate(in) + H(+). Functionally, part of the ABC transporter complex PstSACB involved in phosphate import. Responsible for energy coupling to the transport system. In Nitrosomonas europaea (strain ATCC 19718 / CIP 103999 / KCTC 2705 / NBRC 14298), this protein is Phosphate import ATP-binding protein PstB.